A 451-amino-acid chain; its full sequence is Probable metal transport system membrane protein CT_069 (451 aa).

A run of 8 helical transmembrane segments spans residues 14–34, 38–58, 70–90, 100–120, 145–165, 192–212, 233–253, and 269–289; these read SFLA…ILLV, PLLS…GALL, WVII…ISFL, SALC…VSYV, TEAK…WWWY, VLVF…ILLI, ILIL…YFSV, and ILPT…LCLI. The disordered stretch occupies residues 432-451; that stretch reads PDYDPHQREIPKRTRKSDGC. Basic and acidic residues predominate over residues 434-451; the sequence is YDPHQREIPKRTRKSDGC.

The protein belongs to the ABC-3 integral membrane protein family.

Its subcellular location is the cell inner membrane. Its function is as follows. Part of an ATP-driven transport system CT_067/CT_068/CT_069/CT_070 for a metal. The polypeptide is Probable metal transport system membrane protein CT_069 (Chlamydia trachomatis serovar D (strain ATCC VR-885 / DSM 19411 / UW-3/Cx)).